The sequence spans 438 residues: MEVSRPYVNTVDVIDFGIDKRFFRLPVSGILAQEGITPNGPQIAIINALEDPRHRFVTACVSRRVGKSFIAYTLGFLKLLEPNVKVLVVAPNYSLANIGWSQIRGLIKKYGLQTERENAKDKEIELANGSLFKLASAAQADSAVGRSYDFIIFDEAAISDVGGDAFRVQLRPTLDKPNSKALFISTPRGGNWFKEFYAYGFDDTLPNWVSIHGTYRDNPRADLNDIEEARRTVSKNYFRQEYEADFSVFEGQIFDTFNAIDHVKDLKGMRHFFKDDEAFETLLGIDVGYRDPTAVLTIKYHYDTDTYYVLEEYQQAEKTTAQHAAYIQHCIDRYKVDRIFVDSAAAQFRQDLAYEHEIASAPAKKSVLDGLACLQALFQQGKIIVDASCSSLIHALQNYKWDFQEGEEKLSREKPRHDANSHLCDALRYGIYSISRGK.

A Walker A motif motif is present at residues 62-68; sequence SRRVGKS. A Walker B motif motif is present at residues 150-155; sequence FIIFDE. The active-site For ATPase activity is E155. D286, D342, and D418 together coordinate Mg(2+).

This sequence belongs to the Tequatrovirus large terminase family. In terms of assembly, interacts with the terminase small subunit; the active complex is probably heterooligomeric. Interacts with the portal protein. Mg(2+) is required as a cofactor.

Its function is as follows. The terminase large subunit acts as an ATP driven molecular motor necessary for viral DNA translocation into empty capsids and as an endonuclease that cuts the viral genome to initiate and to end a packaging reaction The terminase lies at a unique vertex of the procapsid and is composed of two subunits, a small terminase subunit involved in viral DNA recognition (packaging sequence), and a large terminase subunit possessing endonucleolytic and ATPase activities. Both terminase subunits heterooligomerize and are docked on the portal protein to form the packaging machine. The terminase large subunit exhibits endonuclease activity and cleaves the viral genome concatemer. Direct long terminal repeats at each end of the genome are duplicated in concert with packaging. Once the capsid is packaged with the DNA, the terminase complex is substituted by the tail. The polypeptide is Terminase, large subunit (Escherichia phage T5 (Enterobacteria phage T5)).